The chain runs to 132 residues: MTGELEVKNMDMKPGSTLKITGSIADGTDGFVINLGQGTDKLNLHFNPRFSESTIVCNSLDGSNWGQEQREDHLCFSPGSEVKFTVTFESDKFKVKLPDGHELTFPNRLGHSHLSYLSVRGGFNMSSFKLKE.

Positions Glu4–Lys131 constitute a Galectin domain. Trp65–Glu71 is an a beta-D-galactoside binding site.

Homodimer.

This protein binds beta-galactoside. Its physiological function is not yet known. This chain is Galectin-2 (LGALS2), found in Homo sapiens (Human).